The following is a 271-amino-acid chain: Bis(5'-nucleosyl)-tetraphosphatase, symmetrical (271 aa).

Belongs to the Ap4A hydrolase family.

The catalysed reaction is P(1),P(4)-bis(5'-adenosyl) tetraphosphate + H2O = 2 ADP + 2 H(+). Its function is as follows. Hydrolyzes diadenosine 5',5'''-P1,P4-tetraphosphate to yield ADP. The polypeptide is Bis(5'-nucleosyl)-tetraphosphatase, symmetrical (Aliivibrio fischeri (strain MJ11) (Vibrio fischeri)).